A 396-amino-acid polypeptide reads, in one-letter code: Septu protein PtuA (396 aa).

In terms of biological role, component of antiviral defense system Septu type I, composed of PtuA and PtuB. Expression of Septu type I in B.subtilis (strain BEST7003) confers resistance to phages SBSphiC and SBSphiJ. May be an ATPase. The sequence is that of Septu protein PtuA from Bacillus thuringiensis.